Reading from the N-terminus, the 327-residue chain is AA9 family lytic polysaccharide monooxygenase B (327 aa).

The N-terminal stretch at Met1–Ala19 is a signal peptide. Residues His20 and His98 each coordinate Cu(2+). The cysteines at positions 68 and 192 are disulfide-linked. O2-binding residues include His178 and Gln187. Tyr189 contributes to the Cu(2+) binding site. The span at Ser264–Pro280 shows a compositional bias: low complexity. Residues Ser264–Gly284 are disordered. The 37-residue stretch at Cys291–Val327 folds into the CBM1 domain. N-linked (GlcNAc...) asparagine glycosylation is present at Asn317.

The protein belongs to the polysaccharide monooxygenase AA9 family. Requires Cu(2+) as cofactor.

The protein resides in the secreted. It carries out the reaction [(1-&gt;4)-beta-D-glucosyl]n+m + reduced acceptor + O2 = 4-dehydro-beta-D-glucosyl-[(1-&gt;4)-beta-D-glucosyl]n-1 + [(1-&gt;4)-beta-D-glucosyl]m + acceptor + H2O.. In terms of biological role, lytic polysaccharide monooxygenase (LPMO) that depolymerizes crystalline and amorphous polysaccharides via the oxidation of scissile alpha- or beta-(1-4)-glycosidic bonds, yielding C1 or C4 oxidation products. Catalysis by LPMOs requires the reduction of the active-site copper from Cu(II) to Cu(I) by a reducing agent and H(2)O(2) or O(2) as a cosubstrate. The protein is AA9 family lytic polysaccharide monooxygenase B (LPMO9B) of Podospora anserina (strain S / ATCC MYA-4624 / DSM 980 / FGSC 10383) (Pleurage anserina).